A 127-amino-acid chain; its full sequence is Fatty acid binding protein 1-A, liver (127 aa).

It belongs to the calycin superfamily. Fatty-acid binding protein (FABP) family. In adults, weakly expressed in the intestine.

It localises to the cytoplasm. Functionally, binds free fatty acids and their coenzyme A derivatives, bilirubin, and some other small molecules in the cytoplasm. May be involved in intracellular lipid transport. In Danio rerio (Zebrafish), this protein is Fatty acid binding protein 1-A, liver.